Consider the following 428-residue polypeptide: Enolase (428 aa).

Q163 is a binding site for (2R)-2-phosphoglycerate. E205 acts as the Proton donor in catalysis. Residues D242, E283, and D310 each contribute to the Mg(2+) site. (2R)-2-phosphoglycerate is bound by residues K335, R364, S365, and K386. K335 functions as the Proton acceptor in the catalytic mechanism.

The protein belongs to the enolase family. The cofactor is Mg(2+).

The protein localises to the cytoplasm. It is found in the secreted. It localises to the cell surface. It carries out the reaction (2R)-2-phosphoglycerate = phosphoenolpyruvate + H2O. It functions in the pathway carbohydrate degradation; glycolysis; pyruvate from D-glyceraldehyde 3-phosphate: step 4/5. Catalyzes the reversible conversion of 2-phosphoglycerate (2-PG) into phosphoenolpyruvate (PEP). It is essential for the degradation of carbohydrates via glycolysis. The chain is Enolase from Sulfurihydrogenibium sp. (strain YO3AOP1).